The following is a 109-amino-acid chain: Photosystem II reaction center Psb28 protein (109 aa).

This sequence belongs to the Psb28 family. As to quaternary structure, part of the photosystem II complex.

The protein localises to the plastid. The protein resides in the chloroplast thylakoid membrane. In Cyanidioschyzon merolae (strain NIES-3377 / 10D) (Unicellular red alga), this protein is Photosystem II reaction center Psb28 protein.